Here is a 1173-residue protein sequence, read N- to C-terminus: SMC5-SMC6 complex localization factor protein 2 (1173 aa).

Positions 1–109 are disordered; it reads MTRRCMPARP…KPKRVPPEKS (109 aa). Composition is skewed to basic and acidic residues over residues 39–50 and 88–106; these read KRTESPGDRKQS and QFERKLSSPKESKPKRVPP. The APIM motif motif lies at 137 to 149; that stretch reads SLASKYLAKGTNI. Disordered stretches follow at residues 161–230, 256–275, 280–373, 394–620, and 635–663; these read MKSL…PEES, QMEQRINSENSFSEASSLSL, ERKY…QKEK, KEPS…EEET, and TPAATGKPPALSKGLRSQSSDYTGHVHPG. Positions 181–199 are enriched in basic and acidic residues; that stretch reads ENNEKNDRDRGKTNADSKK. Low complexity-rich tracts occupy residues 212-221 and 262-275; these read SSRSLSSRSS and NSENSFSEASSLSL. The segment covering 280–293 has biased composition (basic and acidic residues); it reads ERKYKPRQEQRKQN. Positions 317-330 are enriched in polar residues; it reads SDSWEPTSAGSKQN. Basic and acidic residues-rich tracts occupy residues 339–349 and 355–373; these read NSVDSDLKSTR and KARESFLEKRPDGPHQKEK. A compositionally biased stretch (polar residues) spans 409 to 428; that stretch reads PSNSGNSGHHSTRNSDQIQV. Serine 481 carries the phosphoserine modification. Residues 499–520 show a composition bias toward basic and acidic residues; sequence SKKDKERSSSKECSGHSTESTK. Residues 571–592 show a composition bias toward low complexity; sequence APSDKAPSEGESSGNSNAGSSA. Residues 602-619 are compositionally biased toward acidic residues; the sequence is DSDEESLGYNLDSDEEEE. Residues serine 603, serine 607, and serine 614 each carry the phosphoserine modification. An interaction with SIMC1 region spans residues 635–1173; the sequence is TPAATGKPPA…QLHDFWVPDS (539 aa). Residues 664 to 1166 form an NSE6-like domain region; sequence TYTNTLERLV…NCRPTQGQLH (503 aa). The interval 702–1173 is required for interaction with SLF1 and RAD18; sequence PIRIGEEDST…QLHDFWVPDS (472 aa).

Belongs to the FAM178 family. In terms of assembly, forms a heterodimer with SIMC1. Interacts with SLF1 (via N-terminus); this interaction links RAD18 to the SMC5-SMC6 complex. Interacts with RAD18; this interaction is increased in a SLF1-dependent manner. Interacts with SMC5 and SMC6. As to expression, widely expressed. Expressed at higher level in skeletal muscle and at slightly lower level in brain, liver and heart, than in lung, kidney, spleen and thymus.

Its subcellular location is the nucleus. The protein resides in the PML body. In terms of biological role, plays a role in the DNA damage response (DDR) pathway by regulating postreplication repair of UV-damaged DNA and genomic stability maintenance. The SLF1-SLF2 complex acts to link RAD18 with the SMC5-SMC6 complex at replication-coupled interstrand cross-links (ICL) and DNA double-strand breaks (DSBs) sites on chromatin during DNA repair in response to stalled replication forks. Promotes the recruitment of the SMC5-SMC6 complex to DNA lesions. Plays a role in SMC5-SMC6 complex recruitment for viral restriction. Forms a complex with SIMC1 and this complex is required to recruit SMC5-SMC6 complex to PML nuclear bodies and sites of viral replication. The sequence is that of SMC5-SMC6 complex localization factor protein 2 from Homo sapiens (Human).